The chain runs to 274 residues: Large ribosomal subunit protein uL2cz/uL2cy (274 aa).

2 disordered regions span residues 1 to 22 (MAIH…DSQV) and 225 to 252 (PVDH…GYPA).

Belongs to the universal ribosomal protein uL2 family. In terms of assembly, part of the 50S ribosomal subunit.

The protein resides in the plastid. It is found in the chloroplast. This is Large ribosomal subunit protein uL2cz/uL2cy (rpl2-A) from Barbarea verna (Land cress).